The sequence spans 218 residues: MRIILLGAPGAGKGTQASYICKTLNIPQISTGDMLRAAVQAQTPVGIEAKKVMDAGKLVSDEIILALVKERLASQDCINGCLFDGFPRTIAQAESLKNDSILLDYVMEIHVDDKEIIERMSGRRVHLSSGRTYHVRFNPPKKEGLDDLTGEPLVQREDDQEETVKKRLQIYHDQTAPLLQYYHDWSLTGSPDAPRYSSIKGTGSVEEIRQRILDALNS.

10–15 contributes to the ATP binding site; that stretch reads GAGKGT. The interval 30-59 is NMP; the sequence is STGDMLRAAVQAQTPVGIEAKKVMDAGKLV. AMP-binding positions include T31, R36, 57-59, 85-88, and Q92; these read KLV and GFPR. The interval 122-159 is LID; that stretch reads GRRVHLSSGRTYHVRFNPPKKEGLDDLTGEPLVQREDD. Residues R123 and 132-133 each bind ATP; that span reads TY. Residues R156 and R167 each coordinate AMP. ATP is bound at residue G203.

It belongs to the adenylate kinase family. As to quaternary structure, monomer.

It localises to the cytoplasm. The catalysed reaction is AMP + ATP = 2 ADP. The protein operates within purine metabolism; AMP biosynthesis via salvage pathway; AMP from ADP: step 1/1. Its function is as follows. Catalyzes the reversible transfer of the terminal phosphate group between ATP and AMP. Plays an important role in cellular energy homeostasis and in adenine nucleotide metabolism. In Chlorobium phaeobacteroides (strain DSM 266 / SMG 266 / 2430), this protein is Adenylate kinase.